The chain runs to 440 residues: Glutamate-1-semialdehyde 2,1-aminomutase (440 aa).

At lysine 273 the chain carries N6-(pyridoxal phosphate)lysine.

It belongs to the class-III pyridoxal-phosphate-dependent aminotransferase family. HemL subfamily. Homodimer. The cofactor is pyridoxal 5'-phosphate.

Its subcellular location is the cytoplasm. The enzyme catalyses (S)-4-amino-5-oxopentanoate = 5-aminolevulinate. The protein operates within porphyrin-containing compound metabolism; protoporphyrin-IX biosynthesis; 5-aminolevulinate from L-glutamyl-tRNA(Glu): step 2/2. This Alkaliphilus metalliredigens (strain QYMF) protein is Glutamate-1-semialdehyde 2,1-aminomutase.